The primary structure comprises 555 residues: Glypican-6 (555 aa).

Residues 1-23 (MPSWIRAVILPLSGLLLTLPAAA) form the signal peptide. A compositionally biased stretch (low complexity) spans 348-357 (PALRSARSAP). Disordered regions lie at residues 348–376 (PALR…PTTA) and 480–501 (GNDV…GSGC). S530 carries the GPI-anchor amidated serine lipid modification. The propeptide at 531-555 (ASKFSSSLISWSLVCMVLALQRLYR) is removed in mature form.

The protein belongs to the glypican family. As to expression, in the cartilage growth-plate, gradient of expression with highest levels from the proliferative and pre-hypertrophic zones to lowest, if any, in the hypertrophic zones (at protein level).

The protein localises to the cell membrane. It is found in the secreted. The protein resides in the extracellular space. Functionally, cell surface proteoglycan that bears heparan sulfate. Putative cell surface coreceptor for growth factors, extracellular matrix proteins, proteases and anti-proteases. Enhances migration and invasion of cancer cells through WNT5A signaling. This chain is Glypican-6 (Gpc6), found in Mus musculus (Mouse).